A 318-amino-acid chain; its full sequence is NADH-ubiquinone oxidoreductase chain 1 (318 aa).

A run of 8 helical transmembrane segments spans residues 2 to 22, 68 to 88, 100 to 120, 146 to 166, 171 to 191, 213 to 233, 253 to 273, and 285 to 305; these read PMTN…FLML, ITLY…LWTP, LGLL…LWSG, LAII…STLV, HLWL…STLA, IEYA…NIIM, ELYT…FLWI, and LMHL…MWYI.

This sequence belongs to the complex I subunit 1 family. As to quaternary structure, core subunit of respiratory chain NADH dehydrogenase (Complex I) which is composed of 45 different subunits.

Its subcellular location is the mitochondrion inner membrane. The enzyme catalyses a ubiquinone + NADH + 5 H(+)(in) = a ubiquinol + NAD(+) + 4 H(+)(out). Functionally, core subunit of the mitochondrial membrane respiratory chain NADH dehydrogenase (Complex I) which catalyzes electron transfer from NADH through the respiratory chain, using ubiquinone as an electron acceptor. Essential for the catalytic activity and assembly of complex I. The protein is NADH-ubiquinone oxidoreductase chain 1 (MT-ND1) of Pan troglodytes (Chimpanzee).